Reading from the N-terminus, the 208-residue chain is MFVKICGIKSLEELEIVEKHADATGVVVNSNSKRRIPLEKAREIIENSAIPVFLVSTMVGFSEWAMAIERTGAQYIQVHSNALPQTIDTLKKEFGVFVMKAFRVPTISKNPEEDANRLLSEISRYNADMVLLDTGAGSGKLHDLRVSSLVARKIPVIVAGGLNAENVEEVIKVVKPYGVDVSSGVEKYGIKDPKLVEEFVRRAKNVVW.

Belongs to the TrpF family.

It carries out the reaction N-(5-phospho-beta-D-ribosyl)anthranilate = 1-(2-carboxyphenylamino)-1-deoxy-D-ribulose 5-phosphate. It participates in amino-acid biosynthesis; L-tryptophan biosynthesis; L-tryptophan from chorismate: step 3/5. This Pyrococcus furiosus (strain ATCC 43587 / DSM 3638 / JCM 8422 / Vc1) protein is N-(5'-phosphoribosyl)anthranilate isomerase.